Reading from the N-terminus, the 155-residue chain is Transcriptional repressor NrdR (155 aa).

A zinc finger spans residues 3–34 (CPYCGHLEDRVVDSRETQDGQATRRRRACLSC). An ATP-cone domain is found at 49 to 139 (PQVVKKDGRR…VYRAFRDVGE (91 aa)).

This sequence belongs to the NrdR family. Requires Zn(2+) as cofactor.

Negatively regulates transcription of bacterial ribonucleotide reductase nrd genes and operons by binding to NrdR-boxes. The polypeptide is Transcriptional repressor NrdR (Anaeromyxobacter sp. (strain K)).